The chain runs to 208 residues: Proheparin-binding EGF-like growth factor (208 aa).

The signal sequence occupies residues 1–19; it reads MKLLPSVVLKLLLAAVLSA. The propeptide occupies 20-62; sequence LVTGESLEQLRRGLAAGTSNPDPSTGSTDQLLRLGGGRDRKVR. The Extracellular portion of the chain corresponds to 20-160; it reads LVTGESLEQL…ENRLYTYDHT (141 aa). Residues 34–55 are disordered; the sequence is AAGTSNPDPSTGSTDQLLRLGG. Polar residues predominate over residues 36-49; that stretch reads GTSNPDPSTGSTDQ. 2 O-linked (GalNAc...) threonine glycosylation sites follow: Thr-75 and Thr-85. The interval 81–104 is disordered; that stretch reads QALATPSKEEHGKRKKKGKGLGKK. A compositionally biased stretch (basic residues) spans 93–102; sequence KRKKKGKGLG. An EGF-like domain is found at 104-144; the sequence is KRDPCLRKYKDFCIHGECKYVKELRAPSCICHPGYHGERCH. 3 cysteine pairs are disulfide-bonded: Cys-108-Cys-121, Cys-116-Cys-132, and Cys-134-Cys-143. The segment at 136–148 is toxin-binding domain; it reads PGYHGERCHGLSL. Positions 149 to 208 are cleaved as a propeptide — C-terminal; that stretch reads PVENRLYTYDHTTILAVVAVVLSSVCLLVIVGLLMFRYHRRGGYDVENEEKVKLGMTNSH. The chain crosses the membrane as a helical span at residues 161 to 184; it reads TILAVVAVVLSSVCLLVIVGLLMF. Topologically, residues 185–208 are cytoplasmic; that stretch reads RYHRRGGYDVENEEKVKLGMTNSH.

In terms of assembly, interacts with EGFR and ERBB4. Interacts with FBLN1. O-glycosylated.

The protein localises to the secreted. It localises to the extracellular space. The protein resides in the cell membrane. Functionally, growth factor that mediates its effects via EGFR, ERBB2 and ERBB4. Required for normal cardiac valve formation and normal heart function. Promotes smooth muscle cell proliferation. May be involved in macrophage-mediated cellular proliferation. It is mitogenic for fibroblasts, but not endothelial cells. It is able to bind EGF receptor/EGFR with higher affinity than EGF itself and is a far more potent mitogen for smooth muscle cells than EGF. Also acts as a diphtheria toxin receptor. The chain is Proheparin-binding EGF-like growth factor (HBEGF) from Chlorocebus aethiops (Green monkey).